We begin with the raw amino-acid sequence, 241 residues long: Ribonuclease PH (241 aa).

Residues arginine 89 and 127–129 (GTR) each bind phosphate.

This sequence belongs to the RNase PH family. In terms of assembly, homohexameric ring arranged as a trimer of dimers.

The enzyme catalyses tRNA(n+1) + phosphate = tRNA(n) + a ribonucleoside 5'-diphosphate. In terms of biological role, phosphorolytic 3'-5' exoribonuclease that plays an important role in tRNA 3'-end maturation. Removes nucleotide residues following the 3'-CCA terminus of tRNAs; can also add nucleotides to the ends of RNA molecules by using nucleoside diphosphates as substrates, but this may not be physiologically important. Probably plays a role in initiation of 16S rRNA degradation (leading to ribosome degradation) during starvation. This chain is Ribonuclease PH, found in Xylella fastidiosa (strain 9a5c).